The primary structure comprises 371 residues: Fe(3+) ions import ATP-binding protein FbpC (371 aa).

One can recognise an ABC transporter domain in the interval 5 to 235 (IKIENAQKRY…PANLFVATFI (231 aa)). Residue 37-44 (GPSGCGKT) participates in ATP binding.

The protein belongs to the ABC transporter superfamily. Fe(3+) ion importer (TC 3.A.1.10) family. As to quaternary structure, the complex is composed of two ATP-binding proteins (FbpC), two transmembrane proteins (FbpB) and a solute-binding protein (FbpA).

It localises to the cell inner membrane. It catalyses the reaction Fe(3+)(out) + ATP + H2O = Fe(3+)(in) + ADP + phosphate + H(+). Part of the ABC transporter complex FbpABC involved in Fe(3+) ions import. Responsible for energy coupling to the transport system. The sequence is that of Fe(3+) ions import ATP-binding protein FbpC from Fusobacterium nucleatum subsp. nucleatum (strain ATCC 25586 / DSM 15643 / BCRC 10681 / CIP 101130 / JCM 8532 / KCTC 2640 / LMG 13131 / VPI 4355).